Consider the following 31-residue polypeptide: MPTLTSYFGFLLAALTITSALFIGLSKIRLI.

Residues 4–26 traverse the membrane as a helical segment; that stretch reads LTSYFGFLLAALTITSALFIGLS.

This sequence belongs to the PetL family. In terms of assembly, the 4 large subunits of the cytochrome b6-f complex are cytochrome b6, subunit IV (17 kDa polypeptide, PetD), cytochrome f and the Rieske protein, while the 4 small subunits are PetG, PetL, PetM and PetN. The complex functions as a dimer.

The protein localises to the plastid. Its subcellular location is the chloroplast thylakoid membrane. In terms of biological role, component of the cytochrome b6-f complex, which mediates electron transfer between photosystem II (PSII) and photosystem I (PSI), cyclic electron flow around PSI, and state transitions. PetL is important for photoautotrophic growth as well as for electron transfer efficiency and stability of the cytochrome b6-f complex. This is Cytochrome b6-f complex subunit 6 from Aethionema cordifolium (Lebanon stonecress).